The chain runs to 147 residues: Receptor activity-modifying protein 3 (147 aa).

The first 22 residues, 1-22 (MKTPAQRLHLLPLLLLLCGECA), serve as a signal peptide directing secretion. Topologically, residues 23-112 (QVCGCNETGM…CTVDRTHWED (90 aa)) are extracellular. N-linked (GlcNAc...) asparagine glycosylation is found at Asn-28, Asn-57, Asn-70, and Asn-102. 2 disulfide bridges follow: Cys-39–Cys-71 and Cys-56–Cys-103. The helical transmembrane segment at 113–137 (PPDEVLIPLIAVPVVLTVAMAGLVV) threads the bilayer. Residues 138–147 (WRSKHTDRLL) lie on the Cytoplasmic side of the membrane.

The protein belongs to the RAMP family. As to quaternary structure, heterodimer of CALCRL and RAMP3; interaction induces allosteric modulation of CALCRL function and ligand specificity for adrenomedullin/ADM and intermedin/ADM2. Heterodimer of CALCR and RAMP3; interaction form the receptor complex AMYR3 for amylin/IAPP. Interacts with GPER1. As to expression, expressed predominantly in the testis, embryonic and adult brain and in kidney.

It localises to the cell membrane. The protein resides in the membrane. In terms of biological role, accessory protein that interacts with and modulates the function of G-protein coupled receptors including calcitonin gene-related peptide type 1 receptor (CALCRL), calcitonin receptor (CALCR) and G-protein coupled estrogen receptor 1 (GPER1). Required for the transport of CALCRL and GPER1 receptors to the plasma membrane. Plays a role in cardioprotection by reducing cardiac hypertrophy and perivascular fibrosis in a GPER1-dependent manner. Together with CALCRL, form a receptor complex for adrenomedullin/ADM and intermedin/ADM2. Together with CALCR, act as a receptor complex for amylin/IAPP. The sequence is that of Receptor activity-modifying protein 3 from Mus musculus (Mouse).